Here is a 126-residue protein sequence, read N- to C-terminus: MALEAATAPRALLAACLVLLVLGGGTGPSSVLRAPGRRPAAVPAAAERLLRCRAYLVPARRTPARTAAALSAVCTSAPAAPWASSTACPAGATSPKPTAPLEAGTWHACCNGWQEGRGIRSVSISQ.

The or 24, or 26 signal peptide spans 1–23; it reads MALEAATAPRALLAACLVLLVLG.

In terms of tissue distribution, enhanced expression in male flowers. Accumulates in the tapetum.

The protein is MFS14 protein (MFS14) of Zea mays (Maize).